Consider the following 1343-residue polypeptide: DNA-directed RNA polymerase subunit beta (1343 aa).

The protein belongs to the RNA polymerase beta chain family. As to quaternary structure, the RNAP catalytic core consists of 2 alpha, 1 beta, 1 beta' and 1 omega subunit. When a sigma factor is associated with the core the holoenzyme is formed, which can initiate transcription.

It catalyses the reaction RNA(n) + a ribonucleoside 5'-triphosphate = RNA(n+1) + diphosphate. DNA-dependent RNA polymerase catalyzes the transcription of DNA into RNA using the four ribonucleoside triphosphates as substrates. This is DNA-directed RNA polymerase subunit beta from Haemophilus influenzae (strain ATCC 51907 / DSM 11121 / KW20 / Rd).